We begin with the raw amino-acid sequence, 486 residues long: Glutamyl-tRNA(Gln) amidotransferase subunit A (486 aa).

Catalysis depends on charge relay system residues lysine 74 and serine 149. Catalysis depends on serine 173, which acts as the Acyl-ester intermediate.

The protein belongs to the amidase family. GatA subfamily. Heterotrimer of A, B and C subunits.

It carries out the reaction L-glutamyl-tRNA(Gln) + L-glutamine + ATP + H2O = L-glutaminyl-tRNA(Gln) + L-glutamate + ADP + phosphate + H(+). Functionally, allows the formation of correctly charged Gln-tRNA(Gln) through the transamidation of misacylated Glu-tRNA(Gln) in organisms which lack glutaminyl-tRNA synthetase. The reaction takes place in the presence of glutamine and ATP through an activated gamma-phospho-Glu-tRNA(Gln). The polypeptide is Glutamyl-tRNA(Gln) amidotransferase subunit A (Prochlorococcus marinus (strain SARG / CCMP1375 / SS120)).